Here is a 470-residue protein sequence, read N- to C-terminus: Cell division protein FtsP (470 aa).

Positions 1–27 (MSLSRRQFIQASGIALCAGAVPLKASA) form a signal peptide, tat-type signal. The Plastocyanin-like domain occupies 229–287 (VRLRLLNASNSRRYQLQMSDGRPLHVISGDQGFLPAPVSVKQLSLAPGERREILVDMSN).

The protein belongs to the FtsP family. Post-translationally, predicted to be exported by the Tat system. The position of the signal peptide cleavage has not been experimentally proven.

It localises to the periplasm. Functionally, cell division protein that is required for growth during stress conditions. May be involved in protecting or stabilizing the divisomal assembly under conditions of stress. This chain is Cell division protein FtsP, found in Shigella dysenteriae serotype 1 (strain Sd197).